A 124-amino-acid polypeptide reads, in one-letter code: Non-specific lipid-transfer protein (124 aa).

A signal peptide spans 1–26; the sequence is MANSGVMKLVCLVLACMVVAAPLAEA. 4 disulfide bridges follow: Cys30/Cys77, Cys40/Cys54, Cys55/Cys100, and Cys75/Cys114.

Belongs to the plant LTP family.

Plant non-specific lipid-transfer proteins transfer phospholipids as well as galactolipids across membranes. May play a role in wax or cutin deposition in the cell walls of expanding epidermal cells and certain secretory tissues. The polypeptide is Non-specific lipid-transfer protein (Macadamia integrifolia (Macadamia nut)).